The following is a 265-amino-acid chain: Mlc titration factor A (265 aa).

Zn(2+) is bound by residues H111, H148, H152, and E211.

Belongs to the MtfA family. Interacts with Mlc. Requires Zn(2+) as cofactor.

It localises to the cytoplasm. Its function is as follows. Involved in the modulation of the activity of the glucose-phosphotransferase system (glucose-PTS). Interacts with the transcriptional repressor Mlc, preventing its interaction with DNA and leading to the modulation of expression of genes regulated by Mlc, including ptsG, which encodes the PTS system glucose-specific EIICB component. Functionally, shows zinc-dependent metallopeptidase activity. This is Mlc titration factor A from Escherichia coli O8 (strain IAI1).